We begin with the raw amino-acid sequence, 259 residues long: 4-hydroxy-tetrahydrodipicolinate reductase (259 aa).

Residues 9 to 14 (GAGGRM) and E35 each bind NAD(+). R36 contributes to the NADP(+) binding site. Residues 92–94 (GTT) and 116–119 (APNM) contribute to the NAD(+) site. The Proton donor/acceptor role is filled by H149. Position 150 (H150) interacts with (S)-2,3,4,5-tetrahydrodipicolinate. Catalysis depends on K153, which acts as the Proton donor. 159–160 (GT) is a (S)-2,3,4,5-tetrahydrodipicolinate binding site.

It belongs to the DapB family.

Its subcellular location is the cytoplasm. The enzyme catalyses (S)-2,3,4,5-tetrahydrodipicolinate + NAD(+) + H2O = (2S,4S)-4-hydroxy-2,3,4,5-tetrahydrodipicolinate + NADH + H(+). It carries out the reaction (S)-2,3,4,5-tetrahydrodipicolinate + NADP(+) + H2O = (2S,4S)-4-hydroxy-2,3,4,5-tetrahydrodipicolinate + NADPH + H(+). It functions in the pathway amino-acid biosynthesis; L-lysine biosynthesis via DAP pathway; (S)-tetrahydrodipicolinate from L-aspartate: step 4/4. Its function is as follows. Catalyzes the conversion of 4-hydroxy-tetrahydrodipicolinate (HTPA) to tetrahydrodipicolinate. In Nitratidesulfovibrio vulgaris (strain DSM 19637 / Miyazaki F) (Desulfovibrio vulgaris), this protein is 4-hydroxy-tetrahydrodipicolinate reductase.